We begin with the raw amino-acid sequence, 301 residues long: GTPase Era (301 aa).

Residues 7-175 (YCGFIAIVGR…AAIVRKHLPE (169 aa)) form the Era-type G domain. Residues 15-22 (GRPNVGKS) form a G1 region. GTP is bound at residue 15–22 (GRPNVGKS). Positions 41 to 45 (QTTRH) are G2. The tract at residues 62 to 65 (DTPG) is G3. GTP is bound by residues 62-66 (DTPGL) and 124-127 (NKVD). The segment at 124 to 127 (NKVD) is G4. Positions 154 to 156 (ISA) are G5. The 78-residue stretch at 206-283 (LGAELPYSVT…HLELWVKVKS (78 aa)) folds into the KH type-2 domain.

Belongs to the TRAFAC class TrmE-Era-EngA-EngB-Septin-like GTPase superfamily. Era GTPase family. In terms of assembly, monomer.

It localises to the cytoplasm. The protein resides in the cell inner membrane. Its function is as follows. An essential GTPase that binds both GDP and GTP, with rapid nucleotide exchange. Plays a role in 16S rRNA processing and 30S ribosomal subunit biogenesis and possibly also in cell cycle regulation and energy metabolism. In Escherichia fergusonii (strain ATCC 35469 / DSM 13698 / CCUG 18766 / IAM 14443 / JCM 21226 / LMG 7866 / NBRC 102419 / NCTC 12128 / CDC 0568-73), this protein is GTPase Era.